Reading from the N-terminus, the 488-residue chain is Serine/threonine-protein kinase haspin homolog hrk1 (488 aa).

In terms of domain architecture, Protein kinase spans 156-488 (TFEIQKIGEA…SLLNWVRQKY (333 aa)). Residues 162–170 (IGEASYSEV) and Lys-184 contribute to the ATP site. Asp-305 serves as the catalytic Proton acceptor.

The protein belongs to the protein kinase superfamily. Ser/Thr protein kinase family. Haspin subfamily. In terms of assembly, interacts with pds5 and swi6.

It localises to the cytoplasm. It is found in the chromosome. It carries out the reaction L-seryl-[protein] + ATP = O-phospho-L-seryl-[protein] + ADP + H(+). The enzyme catalyses L-threonyl-[protein] + ATP = O-phospho-L-threonyl-[protein] + ADP + H(+). Functionally, serine/threonine haspin-like protein kinase involved in cell cycle regulation. Acts in chromosomal passenger complex (CPC) targeting to centromeres by phosphorylating histone H3 at 'Thr3' (H3T3ph). The protein is Serine/threonine-protein kinase haspin homolog hrk1 (hrk1) of Schizosaccharomyces pombe (strain 972 / ATCC 24843) (Fission yeast).